The chain runs to 421 residues: 4-hydroxy-3-methylbut-2-en-1-yl diphosphate synthase (flavodoxin) (421 aa).

Residues cysteine 311, cysteine 314, cysteine 357, and glutamate 364 each coordinate [4Fe-4S] cluster.

It belongs to the IspG family. [4Fe-4S] cluster serves as cofactor.

The catalysed reaction is (2E)-4-hydroxy-3-methylbut-2-enyl diphosphate + oxidized [flavodoxin] + H2O + 2 H(+) = 2-C-methyl-D-erythritol 2,4-cyclic diphosphate + reduced [flavodoxin]. It functions in the pathway isoprenoid biosynthesis; isopentenyl diphosphate biosynthesis via DXP pathway; isopentenyl diphosphate from 1-deoxy-D-xylulose 5-phosphate: step 5/6. Converts 2C-methyl-D-erythritol 2,4-cyclodiphosphate (ME-2,4cPP) into 1-hydroxy-2-methyl-2-(E)-butenyl 4-diphosphate. The protein is 4-hydroxy-3-methylbut-2-en-1-yl diphosphate synthase (flavodoxin) of Stenotrophomonas maltophilia (strain K279a).